A 1057-amino-acid polypeptide reads, in one-letter code: Carbamoyl phosphate synthase large chain (1057 aa).

The segment at 1-401 (MPKRDDIQTI…SLLKAIRSLE (401 aa)) is carboxyphosphate synthetic domain. ATP contacts are provided by Arg-129, Arg-169, Gly-175, Gly-176, Lys-208, Ile-210, Glu-215, Gly-241, Ile-242, His-243, Gln-284, and Glu-298. In terms of domain architecture, ATP-grasp 1 spans 133–327 (RSLMNDLNVP…IAKLAAKIAV (195 aa)). Positions 284, 298, and 300 each coordinate Mg(2+). Positions 284, 298, and 300 each coordinate Mn(2+). Positions 402 to 546 (YGVHHLGLPN…YGTYETENES (145 aa)) are oligomerization domain. The tract at residues 547–929 (IVTDKEKILV…ALYKGLTGSG (383 aa)) is carbamoyl phosphate synthetic domain. In terms of domain architecture, ATP-grasp 2 spans 671–861 (EALLHTIDVP…MAQLAMQAIM (191 aa)). 10 residues coordinate ATP: Arg-707, Arg-746, Leu-748, Glu-752, Gly-777, Val-778, His-779, Ser-780, Gln-820, and Glu-832. Residues Gln-820, Glu-832, and Asn-834 each coordinate Mg(2+). Mn(2+)-binding residues include Gln-820, Glu-832, and Asn-834. In terms of domain architecture, MGS-like spans 930 to 1057 (VEVKDHGTVL…ESMTFSMRTM (128 aa)). The allosteric domain stretch occupies residues 930–1057 (VEVKDHGTVL…ESMTFSMRTM (128 aa)).

This sequence belongs to the CarB family. Composed of two chains; the small (or glutamine) chain promotes the hydrolysis of glutamine to ammonia, which is used by the large (or ammonia) chain to synthesize carbamoyl phosphate. Tetramer of heterodimers (alpha,beta)4. Requires Mg(2+) as cofactor. Mn(2+) is required as a cofactor.

It carries out the reaction hydrogencarbonate + L-glutamine + 2 ATP + H2O = carbamoyl phosphate + L-glutamate + 2 ADP + phosphate + 2 H(+). The catalysed reaction is hydrogencarbonate + NH4(+) + 2 ATP = carbamoyl phosphate + 2 ADP + phosphate + 2 H(+). It functions in the pathway amino-acid biosynthesis; L-arginine biosynthesis; carbamoyl phosphate from bicarbonate: step 1/1. The protein operates within pyrimidine metabolism; UMP biosynthesis via de novo pathway; (S)-dihydroorotate from bicarbonate: step 1/3. In terms of biological role, large subunit of the glutamine-dependent carbamoyl phosphate synthetase (CPSase). CPSase catalyzes the formation of carbamoyl phosphate from the ammonia moiety of glutamine, carbonate, and phosphate donated by ATP, constituting the first step of 2 biosynthetic pathways, one leading to arginine and/or urea and the other to pyrimidine nucleotides. The large subunit (synthetase) binds the substrates ammonia (free or transferred from glutamine from the small subunit), hydrogencarbonate and ATP and carries out an ATP-coupled ligase reaction, activating hydrogencarbonate by forming carboxy phosphate which reacts with ammonia to form carbamoyl phosphate. In Staphylococcus haemolyticus (strain JCSC1435), this protein is Carbamoyl phosphate synthase large chain.